The sequence spans 505 residues: 2,3-bisphosphoglycerate-independent phosphoglycerate mutase (505 aa).

Residues aspartate 11 and serine 61 each coordinate Mn(2+). Residue serine 61 is the Phosphoserine intermediate of the active site. Residues histidine 122, 152-153 (RD), arginine 184, arginine 190, 258-261 (RPDR), and lysine 331 each bind substrate. Mn(2+) is bound by residues aspartate 396, histidine 400, aspartate 437, histidine 438, and histidine 455.

It belongs to the BPG-independent phosphoglycerate mutase family. Monomer. Requires Mn(2+) as cofactor.

It catalyses the reaction (2R)-2-phosphoglycerate = (2R)-3-phosphoglycerate. It functions in the pathway carbohydrate degradation; glycolysis; pyruvate from D-glyceraldehyde 3-phosphate: step 3/5. Functionally, catalyzes the interconversion of 2-phosphoglycerate and 3-phosphoglycerate. This is 2,3-bisphosphoglycerate-independent phosphoglycerate mutase from Mesomycoplasma hyopneumoniae (strain J / ATCC 25934 / NCTC 10110) (Mycoplasma hyopneumoniae).